A 510-amino-acid chain; its full sequence is 2,3-bisphosphoglycerate-independent phosphoglycerate mutase (510 aa).

The Mn(2+) site is built by D13 and S63. The Phosphoserine intermediate role is filled by S63. Substrate-binding positions include H124, 154–155, R186, R192, 262–265, and K334; these read RD and RADR. The Mn(2+) site is built by D401, H405, D442, H443, and H461.

Belongs to the BPG-independent phosphoglycerate mutase family. As to quaternary structure, monomer. The cofactor is Mn(2+).

It catalyses the reaction (2R)-2-phosphoglycerate = (2R)-3-phosphoglycerate. Its pathway is carbohydrate degradation; glycolysis; pyruvate from D-glyceraldehyde 3-phosphate: step 3/5. Catalyzes the interconversion of 2-phosphoglycerate and 3-phosphoglycerate. The polypeptide is 2,3-bisphosphoglycerate-independent phosphoglycerate mutase (Vibrio cholerae serotype O1 (strain ATCC 39541 / Classical Ogawa 395 / O395)).